We begin with the raw amino-acid sequence, 184 residues long: Small ribosomal subunit protein bS16 (184 aa).

Residues 150-160 (KKAAEAAEKAA) are compositionally biased toward basic and acidic residues. Residues 150–184 (KKAAEAAEKAAAEAPAEEATEAPAEEAAATEAAAE) form a disordered region. Over residues 164–173 (PAEEATEAPA) the composition is skewed to acidic residues. Positions 174 to 184 (EEAAATEAAAE) are enriched in low complexity.

This sequence belongs to the bacterial ribosomal protein bS16 family.

The protein is Small ribosomal subunit protein bS16 of Bacteroides thetaiotaomicron (strain ATCC 29148 / DSM 2079 / JCM 5827 / CCUG 10774 / NCTC 10582 / VPI-5482 / E50).